The primary structure comprises 323 residues: Ribosomal RNA small subunit methyltransferase H (323 aa).

Residues 39–41 (GGY), Asp-57, Phe-84, Asp-103, and Gln-110 contribute to the S-adenosyl-L-methionine site.

It belongs to the methyltransferase superfamily. RsmH family.

The protein localises to the cytoplasm. The enzyme catalyses cytidine(1402) in 16S rRNA + S-adenosyl-L-methionine = N(4)-methylcytidine(1402) in 16S rRNA + S-adenosyl-L-homocysteine + H(+). Its function is as follows. Specifically methylates the N4 position of cytidine in position 1402 (C1402) of 16S rRNA. In Gluconobacter oxydans (strain 621H) (Gluconobacter suboxydans), this protein is Ribosomal RNA small subunit methyltransferase H.